Here is a 543-residue protein sequence, read N- to C-terminus: Probable E3 ubiquitin-protein ligase ARI9 (543 aa).

Positions 1 to 26 (MDFSDDDMIDNKSGEENYSYGGGNES) are disordered. A TRIAD supradomain region spans residues 124-332 (VNIQCGICFE…RHSGACNRFV (209 aa)). Residues Cys-128, Cys-131, Cys-145, His-147, Cys-150, Cys-153, Cys-173, Cys-178, Cys-217, Cys-222, Cys-240, Cys-242, Cys-247, Cys-250, His-255, Cys-260, Cys-287, and Cys-290 each coordinate Zn(2+). The RING-type 1 zinc-finger motif lies at 128 to 178 (CGICFESYTREEIARVSCGHPYCKTCWAGYITTKIEDGPGCLRVKCPEPSC). The segment at 197–260 (EKYSRYILRS…SEDAHSPVDC (64 aa)) adopts an IBR-type zinc-finger fold. An RING-type 2; atypical zinc finger spans residues 287-317 (CPECKRPIEKNDGCNHMTCSAPCGHEFCWIC). Cys-300 is an active-site residue. Cys-305, Cys-309, Cys-314, Cys-317, His-324, and Cys-328 together coordinate Zn(2+).

Belongs to the RBR family. Ariadne subfamily. Requires Zn(2+) as cofactor.

It catalyses the reaction [E2 ubiquitin-conjugating enzyme]-S-ubiquitinyl-L-cysteine + [acceptor protein]-L-lysine = [E2 ubiquitin-conjugating enzyme]-L-cysteine + [acceptor protein]-N(6)-ubiquitinyl-L-lysine.. It functions in the pathway protein modification; protein ubiquitination. In terms of biological role, might act as an E3 ubiquitin-protein ligase, or as part of E3 complex, which accepts ubiquitin from specific E2 ubiquitin-conjugating enzymes and then transfers it to substrates. This is Probable E3 ubiquitin-protein ligase ARI9 (ARI9) from Arabidopsis thaliana (Mouse-ear cress).